The following is a 339-amino-acid chain: Phenylalanine--tRNA ligase alpha subunit (339 aa).

Residue Glu-247 participates in Mg(2+) binding.

This sequence belongs to the class-II aminoacyl-tRNA synthetase family. Phe-tRNA synthetase alpha subunit type 1 subfamily. As to quaternary structure, tetramer of two alpha and two beta subunits. Requires Mg(2+) as cofactor.

The protein localises to the cytoplasm. It catalyses the reaction tRNA(Phe) + L-phenylalanine + ATP = L-phenylalanyl-tRNA(Phe) + AMP + diphosphate + H(+). The protein is Phenylalanine--tRNA ligase alpha subunit of Deinococcus geothermalis (strain DSM 11300 / CIP 105573 / AG-3a).